Reading from the N-terminus, the 917-residue chain is Protein Ami (917 aa).

The first 30 residues, 1–30, serve as a signal peptide directing secretion; the sequence is MKKLVKSAVVFAGLVFIGTSATMITEKASA. The region spanning 118–245 is the N-acetylmuramoyl-L-alanine amidase domain; sequence KPEGIVIHET…YLGGTTHTDP (128 aa). The interval 262–917 is GW repeat region, necessary and sufficient for cell surface attachment; the sequence is LINEKYKAMQ…KAANLSAKKQ (656 aa). GW domains follow at residues 279–358, 361–435, 440–519, 522–596, 601–679, 682–756, 761–840, and 843–917; these read YDKA…TFYT, MEKT…TTKY, MEKN…ATQY, and MEKN…AKKQ.

It in the N-terminal section; belongs to the N-acetylmuramoyl-L-alanine amidase 2 family.

The protein localises to the cell surface. It localises to the cell membrane. Functionally, a bacteriolysin able to lyse both L.monocytogenes and S.aureus. This is Protein Ami from Listeria monocytogenes serotype 1/2a (strain EGD / Mackaness).